We begin with the raw amino-acid sequence, 265 residues long: U6 snRNA phosphodiesterase 1 (265 aa).

The interval 1–67 is disordered; sequence MSAAPLVGYS…EGPVDDSAKH (67 aa). Residues 20 to 32 are compositionally biased toward basic and acidic residues; the sequence is AGARVRPGAEGRS. The Proton acceptor role is filled by histidine 120. Position 120-122 (120-122) interacts with AMP; it reads HLS. UMP contacts are provided by residues glutamine 164, tyrosine 202, and 206-210; that span reads SFHIS. AMP contacts are provided by residues tyrosine 202 and 204–210; that span reads DPSFHIS. The active-site Proton donor is histidine 208.

Belongs to the 2H phosphoesterase superfamily. USB1 family. In terms of assembly, interacts with PLRG1, CDC5L and PRPF19.

The protein resides in the nucleus. It carries out the reaction a 3'-end uridylyl-uridine-RNA = a 3'-end 2',3'-cyclophospho-uridine-RNA + uridine. The catalysed reaction is a 3'-end uridylyl-adenosine-RNA = a 3'-end 2',3'-cyclophospho-uridine-RNA + adenosine. In terms of biological role, 3'-5' RNA exonuclease that trims the 3' end of oligo(U) and oligo(A) tracts of the pre-U6 small nuclear RNA (snRNA) molecule, leading to the formation of a mature U6 snRNA 3' end-terminated with a 2',3'-cyclic phosphate. Participates in the U6 snRNA 3' end processing that prevents U6 snRNA degradation. In addition also removes uridines from the 3' end of U6atac snRNA and possibly the vault RNA VTRNA1-1. This is U6 snRNA phosphodiesterase 1 from Bos taurus (Bovine).